Reading from the N-terminus, the 607-residue chain is Elongation factor 4 (607 aa).

The tr-type G domain occupies 11–193 (ENIRNFSIIA…KIVEVVPAPD (183 aa)). Residues 23 to 28 (DHGKST) and 140 to 143 (NKID) each bind GTP.

This sequence belongs to the TRAFAC class translation factor GTPase superfamily. Classic translation factor GTPase family. LepA subfamily.

It is found in the cell membrane. It catalyses the reaction GTP + H2O = GDP + phosphate + H(+). Required for accurate and efficient protein synthesis under certain stress conditions. May act as a fidelity factor of the translation reaction, by catalyzing a one-codon backward translocation of tRNAs on improperly translocated ribosomes. Back-translocation proceeds from a post-translocation (POST) complex to a pre-translocation (PRE) complex, thus giving elongation factor G a second chance to translocate the tRNAs correctly. Binds to ribosomes in a GTP-dependent manner. The polypeptide is Elongation factor 4 (Staphylococcus aureus (strain USA300)).